Here is a 166-residue protein sequence, read N- to C-terminus: Crossover junction endodeoxyribonuclease RuvC (166 aa).

Catalysis depends on residues Asp7, Glu67, and Asp139. The Mg(2+) site is built by Asp7, Glu67, and Asp139.

Belongs to the RuvC family. In terms of assembly, homodimer which binds Holliday junction (HJ) DNA. The HJ becomes 2-fold symmetrical on binding to RuvC with unstacked arms; it has a different conformation from HJ DNA in complex with RuvA. In the full resolvosome a probable DNA-RuvA(4)-RuvB(12)-RuvC(2) complex forms which resolves the HJ. The cofactor is Mg(2+).

It is found in the cytoplasm. It catalyses the reaction Endonucleolytic cleavage at a junction such as a reciprocal single-stranded crossover between two homologous DNA duplexes (Holliday junction).. Its function is as follows. The RuvA-RuvB-RuvC complex processes Holliday junction (HJ) DNA during genetic recombination and DNA repair. Endonuclease that resolves HJ intermediates. Cleaves cruciform DNA by making single-stranded nicks across the HJ at symmetrical positions within the homologous arms, yielding a 5'-phosphate and a 3'-hydroxyl group; requires a central core of homology in the junction. The consensus cleavage sequence is 5'-(A/T)TT(C/G)-3'. Cleavage occurs on the 3'-side of the TT dinucleotide at the point of strand exchange. HJ branch migration catalyzed by RuvA-RuvB allows RuvC to scan DNA until it finds its consensus sequence, where it cleaves and resolves the cruciform DNA. This Paramagnetospirillum magneticum (strain ATCC 700264 / AMB-1) (Magnetospirillum magneticum) protein is Crossover junction endodeoxyribonuclease RuvC.